Here is a 632-residue protein sequence, read N- to C-terminus: 1-deoxy-D-xylulose-5-phosphate synthase (632 aa).

Thiamine diphosphate contacts are provided by residues His-72 and Gly-113–Ala-115. Asp-144 is a binding site for Mg(2+). Residues Gly-145–Ala-146, Asn-174, Tyr-285, and Glu-368 contribute to the thiamine diphosphate site. Mg(2+) is bound at residue Asn-174.

Belongs to the transketolase family. DXPS subfamily. As to quaternary structure, homodimer. The cofactor is Mg(2+). Thiamine diphosphate serves as cofactor.

It carries out the reaction D-glyceraldehyde 3-phosphate + pyruvate + H(+) = 1-deoxy-D-xylulose 5-phosphate + CO2. It functions in the pathway metabolic intermediate biosynthesis; 1-deoxy-D-xylulose 5-phosphate biosynthesis; 1-deoxy-D-xylulose 5-phosphate from D-glyceraldehyde 3-phosphate and pyruvate: step 1/1. In terms of biological role, catalyzes the acyloin condensation reaction between C atoms 2 and 3 of pyruvate and glyceraldehyde 3-phosphate to yield 1-deoxy-D-xylulose-5-phosphate (DXP). The sequence is that of 1-deoxy-D-xylulose-5-phosphate synthase from Cyanothece sp. (strain PCC 7425 / ATCC 29141).